Here is a 181-residue protein sequence, read N- to C-terminus: Protein GrpE (181 aa).

Residues 1–21 (MNKEQQDLQTEQEAAVETAEL) are disordered. Residues 8–21 (LQTEQEAAVETAEL) are compositionally biased toward low complexity.

The protein belongs to the GrpE family. Homodimer.

The protein localises to the cytoplasm. Participates actively in the response to hyperosmotic and heat shock by preventing the aggregation of stress-denatured proteins, in association with DnaK and GrpE. It is the nucleotide exchange factor for DnaK and may function as a thermosensor. Unfolded proteins bind initially to DnaJ; upon interaction with the DnaJ-bound protein, DnaK hydrolyzes its bound ATP, resulting in the formation of a stable complex. GrpE releases ADP from DnaK; ATP binding to DnaK triggers the release of the substrate protein, thus completing the reaction cycle. Several rounds of ATP-dependent interactions between DnaJ, DnaK and GrpE are required for fully efficient folding. This is Protein GrpE from Trichlorobacter lovleyi (strain ATCC BAA-1151 / DSM 17278 / SZ) (Geobacter lovleyi).